A 280-amino-acid chain; its full sequence is Eukaryotic translation initiation factor 3 subunit F-1 (280 aa).

The region spanning 8–138 is the MPN domain; the sequence is VRVHPVVLFQ…LRAYVCIQLG (131 aa).

The protein belongs to the eIF-3 subunit F family. As to quaternary structure, component of the eukaryotic translation initiation factor 3 (eIF-3) complex. The eIF-3 complex interacts with pix.

The protein localises to the cytoplasm. Component of the eukaryotic translation initiation factor 3 (eIF-3) complex, which is involved in protein synthesis of a specialized repertoire of mRNAs and, together with other initiation factors, stimulates binding of mRNA and methionyl-tRNAi to the 40S ribosome. The eIF-3 complex specifically targets and initiates translation of a subset of mRNAs involved in cell proliferation. The polypeptide is Eukaryotic translation initiation factor 3 subunit F-1 (Drosophila ananassae (Fruit fly)).